A 423-amino-acid chain; its full sequence is 5-hydroxytryptamine receptor 1A-alpha (423 aa).

Topologically, residues 1–47 (MDLRATSSNDSNATSGYSDTAAVDWDEGENATGSGSLPDPELSYQII) are extracellular. Residues N9, N12, and N30 are each glycosylated (N-linked (GlcNAc...) asparagine). A helical membrane pass occupies residues 48–68 (TSLFLGALILCSIFGNSCVVA). The Cytoplasmic segment spans residues 69-82 (AIALERSLQNVANY). The chain crosses the membrane as a helical span at residues 83–107 (LIGSLAVTDLMVSVLVLPMAALYQV). The Extracellular segment spans residues 108-116 (LNKWTLGQD). Residues 117-141 (ICDLFIALDVLCCTSSILHLCAIAL) traverse the membrane as a helical segment. The cysteines at positions 118 and 196 are disulfide-linked. D125 and C129 together coordinate serotonin. The DRY motif; important for ligand-induced conformation changes motif lies at 142-144 (DRY). At 142–161 (DRYWAITDPIDYVNKRTPRR) the chain is on the cytoplasmic side. A helical transmembrane segment spans residues 162–183 (AAVLISVTWLIGFSISIPPMLG). The Extracellular portion of the chain corresponds to 184–202 (WRSAEDRANPDACIISQDP). The chain crosses the membrane as a helical span at residues 203 to 225 (GYTIYSTFGAFYIPLILMLVLYG). Over 226 to 347 (RIFKAARFRI…LARERKTVKT (122 aa)) the chain is Cytoplasmic. Residues 311-332 (LPLPNTPQSSSHENINEKTTGT) form a disordered region. Polar residues predominate over residues 316-329 (TPQSSSHENINEKT). 1D-myo-inositol 4-phosphate contacts are provided by S320, K346, T347, and G353. Residues 348 to 371 (LGIIMGTFIFCWLPFFIVALVLPF) traverse the membrane as a helical segment. Residues 372–379 (CAENCYMP) are Extracellular-facing. The chain crosses the membrane as a helical span at residues 380-404 (EWLGAVINWLGYSNSLLNPIIYAYF). Positions 397–401 (NPIIY) match the NPxxY motif; important for ligand-induced conformation changes and signaling motif. The 1D-myo-inositol 4-phosphate site is built by F404, N405, and K406. Residues 405–423 (NKDFQSAFKKILRCKFHRH) lie on the Cytoplasmic side of the membrane.

This sequence belongs to the G-protein coupled receptor 1 family. 5-hydroxytryptamine receptor subfamily.

The protein resides in the cell membrane. With respect to regulation, G-protein coupled receptor activity is regulated by lipids: phosphatidylinositol 4-phosphate increases HTR1A-mediated activity. Its function is as follows. G-protein coupled receptor for 5-hydroxytryptamine (serotonin). Also functions as a receptor for various drugs and psychoactive substances. Ligand binding causes a conformation change that triggers signaling via guanine nucleotide-binding proteins (G proteins) and modulates the activity of downstream effectors, such as adenylate cyclase. HTR1A is coupled to G(i)/G(o) G alpha proteins and mediates inhibitory neurotransmission: signaling inhibits adenylate cyclase activity and activates a phosphatidylinositol-calcium second messenger system that regulates the release of Ca(2+) ions from intracellular stores. Beta-arrestin family members regulate signaling by mediating both receptor desensitization and resensitization processes. The sequence is that of 5-hydroxytryptamine receptor 1A-alpha (htr1aa) from Takifugu rubripes (Japanese pufferfish).